We begin with the raw amino-acid sequence, 430 residues long: Histidine--tRNA ligase (430 aa).

The protein belongs to the class-II aminoacyl-tRNA synthetase family. In terms of assembly, homodimer.

It localises to the cytoplasm. It carries out the reaction tRNA(His) + L-histidine + ATP = L-histidyl-tRNA(His) + AMP + diphosphate + H(+). This Chlamydia felis (strain Fe/C-56) (Chlamydophila felis) protein is Histidine--tRNA ligase.